The primary structure comprises 497 residues: Lysine--tRNA ligase (497 aa).

Positions 405 and 412 each coordinate Mg(2+).

Belongs to the class-II aminoacyl-tRNA synthetase family. Homodimer. Mg(2+) serves as cofactor.

Its subcellular location is the cytoplasm. It catalyses the reaction tRNA(Lys) + L-lysine + ATP = L-lysyl-tRNA(Lys) + AMP + diphosphate. This chain is Lysine--tRNA ligase, found in Gloeobacter violaceus (strain ATCC 29082 / PCC 7421).